A 151-amino-acid chain; its full sequence is Phosphopantetheine adenylyltransferase (151 aa).

Position 9 (Thr-9) interacts with substrate. ATP is bound by residues 9–10 and His-17; that span reads TF. Positions 41, 73, and 87 each coordinate substrate. ATP is bound by residues 88–90, Glu-98, and 122–128; these read GIR and LTCVSST.

Belongs to the bacterial CoaD family. As to quaternary structure, homohexamer. It depends on Mg(2+) as a cofactor.

The protein localises to the cytoplasm. The enzyme catalyses (R)-4'-phosphopantetheine + ATP + H(+) = 3'-dephospho-CoA + diphosphate. It functions in the pathway cofactor biosynthesis; coenzyme A biosynthesis; CoA from (R)-pantothenate: step 4/5. Reversibly transfers an adenylyl group from ATP to 4'-phosphopantetheine, yielding dephospho-CoA (dPCoA) and pyrophosphate. The protein is Phosphopantetheine adenylyltransferase of Bacteroides thetaiotaomicron (strain ATCC 29148 / DSM 2079 / JCM 5827 / CCUG 10774 / NCTC 10582 / VPI-5482 / E50).